Consider the following 501-residue polypeptide: E3 ubiquitin-protein ligase TRIM35 (501 aa).

An N-acetylmethionine modification is found at Met1. At Ser8 the chain carries Phosphoserine. The RING-type zinc finger occupies Cys21–Lys61. Residues Arg96–Ile137 form a B box-type zinc finger. The Zn(2+) site is built by Cys101, His104, Cys123, and His129. Residues Met209–Phe252 are a coiled coil. A B30.2/SPRY domain is found at Leu284–Ile495.

Interacts with PKM isoform M2, but not isoform M1; this interaction may compete with that between PKM and FGFR1, and hence reduces FGFR1-dependent tyrosine phosphorylation of PKM. Interacts with IRF7; this interaction promotes IRF7 proteasomal degradation. Interacts with TRAF3; this interaction promotes TRAF3 activation.

It is found in the cytoplasm. The protein resides in the nucleus. It catalyses the reaction S-ubiquitinyl-[E2 ubiquitin-conjugating enzyme]-L-cysteine + [acceptor protein]-L-lysine = [E2 ubiquitin-conjugating enzyme]-L-cysteine + N(6)-ubiquitinyl-[acceptor protein]-L-lysine.. It participates in protein modification; protein ubiquitination. Functionally, E3 ubiquitin-protein ligase that participates in multiple biological processes including cell death, glucose metabolism, and in particular, the innate immune response. Mediates 'Lys-63'-linked polyubiquitination of TRAF3 thereby promoting type I interferon production via RIG-I signaling pathway. Can also catalyze 'Lys-48'-linked polyubiquitination and proteasomal degradation of viral proteins such as influenza virus PB2. Acts as a negative feedback regulator of TLR7- and TLR9-triggered signaling. Mechanistically, promotes the 'Lys-48'-linked ubiquitination of IRF7 and induces its degradation via a proteasome-dependent pathway. Reduces FGFR1-dependent tyrosine phosphorylation of PKM, inhibiting PKM-dependent lactate production, glucose metabolism, and cell growth. This chain is E3 ubiquitin-protein ligase TRIM35 (Trim35), found in Rattus norvegicus (Rat).